Consider the following 158-residue polypeptide: MSNEFTHINADGNAHMVDVTEKAVTEREARAEAYIEMAADTLEMIMSGSHHKGDVFATARIAGIQAAKKTSDLIPLCHPLMLTKVEVELEAQPEFNRVRITSLCKLSGKTGVEMEALTAASVAALTIYDMCKAVQKDMVISQTRLLEKRGGKSGHFKV.

Residues 76 to 78 (LCH) and 114 to 115 (ME) each bind substrate. Asp129 is an active-site residue.

It belongs to the MoaC family. Homohexamer; trimer of dimers.

It carries out the reaction (8S)-3',8-cyclo-7,8-dihydroguanosine 5'-triphosphate = cyclic pyranopterin phosphate + diphosphate. It participates in cofactor biosynthesis; molybdopterin biosynthesis. Catalyzes the conversion of (8S)-3',8-cyclo-7,8-dihydroguanosine 5'-triphosphate to cyclic pyranopterin monophosphate (cPMP). This is Cyclic pyranopterin monophosphate synthase from Shewanella sediminis (strain HAW-EB3).